The chain runs to 455 residues: tRNA modification GTPase MnmE (455 aa).

Arg24, Glu81, and Lys120 together coordinate (6S)-5-formyl-5,6,7,8-tetrahydrofolate. The TrmE-type G domain occupies 216–378 (GMTVVIAGRP…LREHLKHCMG (163 aa)). Asn226 is a K(+) binding site. GTP is bound by residues 226-231 (NAGKSS), 245-251 (TDIAGTT), 270-273 (DTAG), and 335-338 (NKAD). Ser230 serves as a coordination point for Mg(2+). K(+)-binding residues include Thr245, Ile247, and Thr250. Thr251 contributes to the Mg(2+) binding site. Lys455 contributes to the (6S)-5-formyl-5,6,7,8-tetrahydrofolate binding site.

The protein belongs to the TRAFAC class TrmE-Era-EngA-EngB-Septin-like GTPase superfamily. TrmE GTPase family. In terms of assembly, homodimer. Heterotetramer of two MnmE and two MnmG subunits. The cofactor is K(+).

Its subcellular location is the cytoplasm. Its function is as follows. Exhibits a very high intrinsic GTPase hydrolysis rate. Involved in the addition of a carboxymethylaminomethyl (cmnm) group at the wobble position (U34) of certain tRNAs, forming tRNA-cmnm(5)s(2)U34. This Stutzerimonas stutzeri (strain A1501) (Pseudomonas stutzeri) protein is tRNA modification GTPase MnmE.